Reading from the N-terminus, the 99-residue chain is Apolipoprotein C-III (99 aa).

The first 20 residues, 1 to 20 (MQPRTLLTVALLALLASARA), serve as a signal peptide directing secretion. Residue Met63 is modified to Methionine sulfoxide. The tract at residues 68-99 (RFLKGYWSKFTDKFTGFWDSNPEDQPTPAIES) is lipid-binding. Residue Thr94 is glycosylated (O-linked (GalNAc...) threonine).

Belongs to the apolipoprotein C3 family. In terms of processing, the most abundant glycoforms are characterized by an O-linked disaccharide galactose linked to N-acetylgalactosamine (Gal-GalNAc), further modified with up to 3 sialic acid residues. Less abundant glycoforms are characterized by more complex and fucosylated glycan moieties. O-glycosylated on Thr-94 with a core 1 or possibly core 8 glycan.

Its subcellular location is the secreted. Component of triglyceride-rich very low density lipoproteins (VLDL) and high density lipoproteins (HDL) in plasma. Plays a multifaceted role in triglyceride homeostasis. Intracellularly, promotes hepatic very low density lipoprotein 1 (VLDL1) assembly and secretion; extracellularly, attenuates hydrolysis and clearance of triglyceride-rich lipoproteins (TRLs). Impairs the lipolysis of TRLs by inhibiting lipoprotein lipase and the hepatic uptake of TRLs by remnant receptors. Formed of several curved helices connected via semiflexible hinges, so that it can wrap tightly around the curved micelle surface and easily adapt to the different diameters of its natural binding partners. The chain is Apolipoprotein C-III (Apoc3) from Mus musculus (Mouse).